The sequence spans 161 residues: Globin CTT-VIIB-5/CTT-VIIB-9 (161 aa).

A signal peptide spans 1–16; that stretch reads MKFFAVLALCIVGAIA. In terms of domain architecture, Globin spans 18-161; it reads PLTADEASLV…NTFAIVVPRL (144 aa). Positions 76 and 111 each coordinate heme b.

It belongs to the globin family. In terms of assembly, homodimer.

This chain is Globin CTT-VIIB-5/CTT-VIIB-9 (CTT-7B5), found in Chironomus thummi thummi (Midge).